The following is a 199-amino-acid chain: uncharacterized protein (199 aa).

Transmembrane regions (helical) follow at residues 41–61, 72–92, 109–129, and 145–165; these read LFIP…AFIC, SLIC…CSPW, TVWV…SIFV, and VTYS…LLNL.

It to M.pneumoniae MPN_037.

Its subcellular location is the cell membrane. This is an uncharacterized protein from Mycoplasma pneumoniae (strain ATCC 29342 / M129 / Subtype 1) (Mycoplasmoides pneumoniae).